A 92-amino-acid chain; its full sequence is Small ribosomal subunit protein uS19c (92 aa).

The protein belongs to the universal ribosomal protein uS19 family.

Its subcellular location is the plastid. The protein localises to the chloroplast. In terms of biological role, protein S19 forms a complex with S13 that binds strongly to the 16S ribosomal RNA. The chain is Small ribosomal subunit protein uS19c from Dioscorea elephantipes (Elephant's foot yam).